Here is a 367-residue protein sequence, read N- to C-terminus: Phosphoribosylaminoimidazole-succinocarboxamide synthase (367 aa).

It belongs to the SAICAR synthetase family.

It carries out the reaction 5-amino-1-(5-phospho-D-ribosyl)imidazole-4-carboxylate + L-aspartate + ATP = (2S)-2-[5-amino-1-(5-phospho-beta-D-ribosyl)imidazole-4-carboxamido]succinate + ADP + phosphate + 2 H(+). Its pathway is purine metabolism; IMP biosynthesis via de novo pathway; 5-amino-1-(5-phospho-D-ribosyl)imidazole-4-carboxamide from 5-amino-1-(5-phospho-D-ribosyl)imidazole-4-carboxylate: step 1/2. The sequence is that of Phosphoribosylaminoimidazole-succinocarboxamide synthase from Shewanella baltica (strain OS155 / ATCC BAA-1091).